The chain runs to 451 residues: Homeobox protein meis3-B (451 aa).

The disordered stretch occupies residues 33 to 64 (HHSLSQSTPYGSTGAAHRVPMPPGMGSNDGLK). The segment covering 34–43 (HSLSQSTPYG) has biased composition (polar residues). Residues 102–185 (GGDVCSSDSF…PIDLVIDDRD (84 aa)) enclose the MEIS N-terminal domain. A disordered region spans residues 206-272 (NNTWIRDHDE…RDKKRNKKRG (67 aa)). Residues 218–230 (STHSGTPGPSSGG) show a composition bias toward low complexity. Polar residues predominate over residues 231–242 (LASQSGDNSSEQ). The homeobox DNA-binding region spans 267 to 329 (RNKKRGIFPK…NARRRIVQPM (63 aa)).

This sequence belongs to the TALE/MEIS homeobox family.

It is found in the nucleus. Functionally, a caudalizing protein which is required to pattern the anterior/posterior (A/P) axis during central nervous system (CNS) formation. Inhibits anterior neural expression and acts as a transcriptional activator to induce posterior neural gene expression. Maintains a proper A/P balance required for hindbrain formation by activating the FGF/MAPK pathway, which modulates the planar cell polarity (PCP) pathway. Interacts with retinoid signaling during hindbrain patterning. The protein is Homeobox protein meis3-B (meis3-b) of Xenopus laevis (African clawed frog).